Consider the following 205-residue polypeptide: Large ribosomal subunit protein uL4 (205 aa).

This sequence belongs to the universal ribosomal protein uL4 family. Part of the 50S ribosomal subunit.

Its function is as follows. One of the primary rRNA binding proteins, this protein initially binds near the 5'-end of the 23S rRNA. It is important during the early stages of 50S assembly. It makes multiple contacts with different domains of the 23S rRNA in the assembled 50S subunit and ribosome. In terms of biological role, forms part of the polypeptide exit tunnel. This chain is Large ribosomal subunit protein uL4, found in Roseobacter denitrificans (strain ATCC 33942 / OCh 114) (Erythrobacter sp. (strain OCh 114)).